A 145-amino-acid chain; its full sequence is D-aminoacyl-tRNA deacylase (145 aa).

The short motif at 137-138 is the Gly-cisPro motif, important for rejection of L-amino acids element; it reads GP.

Belongs to the DTD family. As to quaternary structure, homodimer.

The protein localises to the cytoplasm. It carries out the reaction glycyl-tRNA(Ala) + H2O = tRNA(Ala) + glycine + H(+). The enzyme catalyses a D-aminoacyl-tRNA + H2O = a tRNA + a D-alpha-amino acid + H(+). Its function is as follows. An aminoacyl-tRNA editing enzyme that deacylates mischarged D-aminoacyl-tRNAs. Also deacylates mischarged glycyl-tRNA(Ala), protecting cells against glycine mischarging by AlaRS. Acts via tRNA-based rather than protein-based catalysis; rejects L-amino acids rather than detecting D-amino acids in the active site. By recycling D-aminoacyl-tRNA to D-amino acids and free tRNA molecules, this enzyme counteracts the toxicity associated with the formation of D-aminoacyl-tRNA entities in vivo and helps enforce protein L-homochirality. This Cereibacter sphaeroides (strain KD131 / KCTC 12085) (Rhodobacter sphaeroides) protein is D-aminoacyl-tRNA deacylase.